A 441-amino-acid polypeptide reads, in one-letter code: UDP-N-acetylglucosamine--peptide N-acetylglucosaminyltransferase stabilizing protein GtfB (441 aa).

Belongs to the GtfB family. In terms of assembly, forms a heterotetramer with 2 subunits each of GtfA and GtfB. Part of the accessory SecA2/SecY2 protein translocation apparatus.

It is found in the cell membrane. It participates in protein modification; protein glycosylation. In terms of biological role, required for polymorphic O-glycosylation of the serine-rich repeat protein (SRRP) in this bacteria. A stabilizing protein that is part of the accessory SecA2/SecY2 system specifically required to export serine-rich repeat cell wall proteins encoded in the same operon. The GtfA-GtfB complex adds GlcNAc from UDP-GlcNAc to the substrate protein, attaching the first sugar residue. Stabilizes the glycosylation activity of GtfA. Has no N-acetylglucosaminyl transferase activity on its own. This Limosilactobacillus reuteri subsp. suis (strain ATCC 53608 / LMG 31752 / 1063) (Lactobacillus reuteri) protein is UDP-N-acetylglucosamine--peptide N-acetylglucosaminyltransferase stabilizing protein GtfB.